The following is a 313-amino-acid chain: 2,3-dihydroxyphenylpropionate/2,3-dihydroxicinnamic acid 1,2-dioxygenase (313 aa).

Residue histidine 115 is the Proton donor of the active site. Histidine 179 serves as the catalytic Proton acceptor.

Belongs to the LigB/MhpB extradiol dioxygenase family. Homotetramer. Fe(2+) is required as a cofactor.

It carries out the reaction 3-(2,3-dihydroxyphenyl)propanoate + O2 = (2Z,4E)-2-hydroxy-6-oxonona-2,4-dienedioate + H(+). The catalysed reaction is (2E)-3-(2,3-dihydroxyphenyl)prop-2-enoate + O2 = (2Z,4E,7E)-2-hydroxy-6-oxonona-2,4,7-trienedioate + H(+). It participates in aromatic compound metabolism; 3-phenylpropanoate degradation. Its function is as follows. Catalyzes the non-heme iron(II)-dependent oxidative cleavage of 2,3-dihydroxyphenylpropionic acid and 2,3-dihydroxicinnamic acid into 2-hydroxy-6-ketononadienedioate and 2-hydroxy-6-ketononatrienedioate, respectively. The sequence is that of 2,3-dihydroxyphenylpropionate/2,3-dihydroxicinnamic acid 1,2-dioxygenase from Mycolicibacterium smegmatis (strain ATCC 700084 / mc(2)155) (Mycobacterium smegmatis).